Reading from the N-terminus, the 194-residue chain is Histone H1.0 (194 aa).

At methionine 1 the chain carries N-acetylmethionine. A compositionally biased stretch (low complexity) spans 1–11 (MTENSTSAPAA). A disordered region spans residues 1–28 (MTENSTSAPAAKPKRAKASKKSTDHPKY). N-acetylthreonine; in Histone H1.0, N-terminally processed is present on threonine 2. Residues 24–97 (DHPKYSDMIV…GASGSFRLAK (74 aa)) enclose the H15 domain. A Citrulline modification is found at arginine 42. Positions 86–194 (GVGASGSFRL…SSAKRASKKK (109 aa)) are disordered. An ADP-ribosylserine modification is found at serine 104. The span at 105-194 (VAFKKTKKEV…SSAKRASKKK (90 aa)) shows a compositional bias: basic residues.

Belongs to the histone H1/H5 family. In terms of processing, ADP-ribosylated on Ser-104 in response to DNA damage.

It localises to the nucleus. The protein localises to the chromosome. Its function is as follows. Histones H1 are necessary for the condensation of nucleosome chains into higher-order structures. The histones H1.0 are found in cells that are in terminal stages of differentiation or that have low rates of cell division. This is Histone H1.0 (H1-0) from Mus musculus (Mouse).